The sequence spans 444 residues: MRLAQRYGIALVALLMVGATVLFFWSENIINYENIKFNSPVELVWWSRDMSWNYDVQRQCGIHTCRITNKRSRRPWARGVLFYGSNIKTGDFPLPRNEHQIWALLHEESPRNTPFVSNKEFLRHFHFTSTFSRYSNLPLTTMYLPSGEALTSKDYYVTFDGKSKYGYRPSTSVVFLQSDCDTMSGREDYVKELMKHLPIDSYGSCLRNRDLPESLQKDYLNNLYSPELLRFLSEYKFMIAIENAACPDYITEKFWRPLIMGVIPIYFGSPTIKDWEPNNKSAIFVNDFQNPQALVEYLNKLADNKKLYNSYRQHKLNRRNPISNKKLLHNLVTRQYHIGDSSPGASLFEKFECAVCYHVINTARNVKADLRHYNCPLEPVYAKMEGQKIPQNVADWRAAMEVGQCQAKVLDEFFRRDIGFNDAEFDAELNRRIEGNNCSNSSNT.

Residues 1-6 (MRLAQR) are Cytoplasmic-facing. A helical; Signal-anchor for type II membrane protein membrane pass occupies residues 7–27 (YGIALVALLMVGATVLFFWSE). The Lumenal portion of the chain corresponds to 28-444 (NIINYENIKF…GNNCSNSSNT (417 aa)). Asn279, Asn437, and Asn440 each carry an N-linked (GlcNAc...) asparagine glycan.

This sequence belongs to the glycosyltransferase 10 family.

It is found in the golgi apparatus. The protein localises to the golgi stack membrane. It participates in protein modification; protein glycosylation. The sequence is that of Alpha-(1,3)-fucosyltransferase B (FucTB) from Drosophila melanogaster (Fruit fly).